Reading from the N-terminus, the 116-residue chain is RNA guanine-N7 methyltransferase activating subunit (116 aa).

Positions Met1–Arg55 are interaction with RNMT. A disordered region spans residues Lys31 to Tyr116. Residues Gln36–Asp42 carry the RNMT-activating domain motif. An RNA-binding region spans residues Asp56–Tyr116. A compositionally biased stretch (low complexity) spans Gln67–Tyr78. Over residues Tyr97 to Arg110 the composition is skewed to polar residues.

It belongs to the RAM family.

Its subcellular location is the nucleus. Its function is as follows. Regulatory subunit of the mRNA-capping methyltransferase RNMT:RAMAC complex that methylates the N7 position of the added guanosine to the 5'-cap structure of mRNAs. Promotes the recruitment of the methyl donor, S-adenosyl-L-methionine, to RNMT. Regulates RNMT expression by a post-transcriptional stabilizing mechanism. Binds RNA. The polypeptide is RNA guanine-N7 methyltransferase activating subunit (ramac) (Xenopus tropicalis (Western clawed frog)).